Consider the following 113-residue polypeptide: Hydrogenase maturation factor HybF (113 aa).

Ni(2+) contacts are provided by His2 and Glu3. Zn(2+)-binding residues include Cys73, Cys76, Cys89, and Cys92.

It belongs to the HypA/HybF family. HybF subfamily.

In terms of biological role, involved in the maturation of [NiFe] hydrogenases. Required for nickel insertion into the metal center of the hydrogenase. The protein is Hydrogenase maturation factor HybF of Escherichia coli O157:H7.